A 329-amino-acid polypeptide reads, in one-letter code: Eukaryotic translation initiation factor 3 subunit I (329 aa).

WD repeat units lie at residues 8–47 (GHQR…RLGT), 50–89 (GHGG…NIAT), 145–184 (ITDS…KIHS), 187–226 (EHTH…LLKE), and 284–323 (GHFG…FDYT).

It belongs to the eIF-3 subunit I family. In terms of assembly, component of the eukaryotic translation initiation factor 3 (eIF-3) complex.

It is found in the cytoplasm. Component of the eukaryotic translation initiation factor 3 (eIF-3) complex, which is involved in protein synthesis of a specialized repertoire of mRNAs and, together with other initiation factors, stimulates binding of mRNA and methionyl-tRNAi to the 40S ribosome. The eIF-3 complex specifically targets and initiates translation of a subset of mRNAs involved in cell proliferation. The polypeptide is Eukaryotic translation initiation factor 3 subunit I (Bombyx mori (Silk moth)).